We begin with the raw amino-acid sequence, 331 residues long: D-alanine--D-alanine ligase (331 aa).

The ATP-grasp domain occupies 122-328 (KLWYDAIGIP…FHEFLADCIE (207 aa)). 152–207 (AFDKWGKLFVKAARQGSSVGCYSVTKIEQLSDAIDKAFGFSHQVLVEKAVKPRELE) contributes to the ATP binding site. D282, E295, and N297 together coordinate Mg(2+).

It belongs to the D-alanine--D-alanine ligase family. The cofactor is Mg(2+). Requires Mn(2+) as cofactor.

Its subcellular location is the cytoplasm. It carries out the reaction 2 D-alanine + ATP = D-alanyl-D-alanine + ADP + phosphate + H(+). It functions in the pathway cell wall biogenesis; peptidoglycan biosynthesis. Its function is as follows. Cell wall formation. This is D-alanine--D-alanine ligase from Vibrio vulnificus (strain CMCP6).